Here is a 556-residue protein sequence, read N- to C-terminus: MDGIVPDIAVGTKRGSDELFSTCVSNGPFIMSSSASAANGNDSKKFKGDNRSTGVPSRVIHVRKLPSDVTEGEVISLGLPFGKVTNLLMLKGKNQAFIEMSTEEAANTMVNYYTSVAPVLRGQPIYIQFSNHKELKTDSSPNQARAQAALQAVNSVQSGNLALAASAAAVDAGMAMAGQSPVLRIIVENLFYPVTLDVLHQIFSKFGTVLKIITFTKNNQFQALLQYADPVSAQHAKLSLDGQNIYNACCTLRIDFSKLTSLNVKYNNDKSRDYTRPDLPSGDSQPSLDQTMAAAFGAPGIMSASPYAGAGFPPTFAIPQAAGLSVPNVHGALAPLAIPSAAAAAAAAGRIAIPGLAGAGNSVLLVSNLNPERVTPQSLFILFGVYGDVQRVKILFNKKENALVQMADGSQAQLAMSHLNGHKLHGKSVRITLSKHQSVQLPREGQEDQGLTKDYGSSPLHRFKKPGSKNFQNIFPPSATLHLSNIPPSVSEDDLKSLFSSNGGVVKGFKFFQKDRKMALIQMGSVEEAVQALIELHNHDLGENHHLRVSFSKSTI.

Methionine 1 carries the post-translational modification N-acetylmethionine. Residue serine 16 is modified to Phosphoserine. A disordered region spans residues 35–54 (ASAANGNDSKKFKGDNRSTG). RRM domains lie at 58–142 (RVIH…SSPN), 183–259 (LRII…FSKL), and 362–436 (SVLL…LSKH). Lysine 64 is covalently cross-linked (Glycyl lysine isopeptide (Lys-Gly) (interchain with G-Cter in SUMO2)). The residue at position 126 (tyrosine 126) is a Phosphotyrosine. At threonine 137 the chain carries Phosphothreonine. Residue serine 140 is modified to Phosphoserine. A Glycyl lysine isopeptide (Lys-Gly) (interchain with G-Cter in SUMO2) cross-link involves residue lysine 217. Positions 436-458 (HQSVQLPREGQEDQGLTKDYGSS) are disordered. Residue serine 458 is modified to Phosphoserine. The RRM 4 domain occupies 479 to 554 (ATLHLSNIPP…HHLRVSFSKS (76 aa)).

Monomer. Part of a ternary complex containing KHSRP, PTBP1, PTBP2 and HNRPH1. Interacts with RAVER1 and SFPQ.

Its subcellular location is the nucleus. In terms of biological role, plays a role in pre-mRNA splicing and in the regulation of alternative splicing events. Activates exon skipping of its own pre-mRNA during muscle cell differentiation. Binds to the polypyrimidine tract of introns. May promote RNA looping when bound to two separate polypyrimidine tracts in the same pre-mRNA. May promote the binding of U2 snRNP to pre-mRNA. Cooperates with RAVER1 to modulate switching between mutually exclusive exons during maturation of the TPM1 pre-mRNA. Represses the splicing of MAPT/Tau exon 10. Binds to polypyrimidine-rich controlling element (PCE) of CFTR and promotes exon skipping of CFTR exon 9, thereby antagonizing TIA1 and its role in exon inclusion of CFTR exon 9. Plays a role in the splicing of pyruvate kinase PKM by binding repressively to a polypyrimidine tract flanking PKM exon 9, inhibiting exon 9 inclusion and resulting in exon 10 inclusion and production of the PKM M2 isoform. This Rattus norvegicus (Rat) protein is Polypyrimidine tract-binding protein 1 (Ptbp1).